The chain runs to 388 residues: Subtilisin-like serine protease AsES (388 aa).

A signal peptide spans 1–15 (MRLSLVLALLPVAFG). A propeptide spans 16-105 (APTRRDEPAP…IEQDAIVTLA (90 aa)) (removed in mature form). Residues 114-388 (PWGLARISTR…RLAFNGNPSG (275 aa)) form the Peptidase S8 domain. Residues cysteine 141 and cysteine 230 are joined by a disulfide bond. Active-site charge relay system residues include aspartate 146 and histidine 176. N-linked (GlcNAc...) asparagine glycosylation is found at asparagine 232 and asparagine 237. A disulfide bridge links cysteine 285 with cysteine 357. The active-site Charge relay system is serine 331.

The protein belongs to the peptidase S8 family.

The protein localises to the secreted. With respect to regulation, the elicitor proteolytic activity is completely inhibited by PMSF. The activity is also significantly reduced by aprotinin (leading to 37% residual activity), by leupeptin (leading to 54% residual activity), by the ovomucoid trypsin inhibitor (leading to 65% residual activity), and by p-aminobenzamidine (leading to 26% residual activity). In terms of biological role, extracellular elicitor protein that induces a strong defense response in strawberry and confers both local and systemic plant resistance against the fungal pathogen Colletotricum acutatum, the casual agent of anthracnose disease. AsES activates a cascade of defense responses, including calcium influx, oxidative burst, hypersensitive cell-death response (HR), accumulation of autofluorescent compounds, cell-wall reinforcement with callose and lignin deposition, salicylic acid accumulation, and expression of defense-related genes, such as PR1, PG1, MYB30, RBOH-D, RBOH-F, CHI23, and FLS. The oxidative burst consists in a progressive extracellular accumulation of H(2)O(2) that starts immediately after the contact with AsES and is preceded by a rapid and transient cell membrane depolarization. During this phase takes place also a rapid intracellular accumulation of NO at the chloroplasts. After the first extracellular H(2)O(2) production phase, two intracellular H(2)O(2) accumulation events occur, the first 2 hours after induction, and the second 7 hours after induction. AsES also produces a transient increase of ion leakage, and a progressive alkalinization of the extracellular medium. Confers also local and systemic plant resistance against Botrytis cinerea in Arabidopsis thaliana. Systemic, but not local resistance is dependent on the length of exposure to AsES. The protection to B.cinerea is due to the induction of the plant defenses via the salicylic acid, jasmonic acid and ethylene signaling pathways. Exhibits subtilisin-like proteolytic activity which is necessary but not sufficient for its elicitor function in strawberry plants. Probably induces defense by means of proteolysis of one or multiple host proteins that are specific targets of this protease. This is Subtilisin-like serine protease AsES from Sarocladium strictum (Black bundle disease fungus).